Here is a 207-residue protein sequence, read N- to C-terminus: Thiamine-phosphate synthase (207 aa).

4-amino-2-methyl-5-(diphosphooxymethyl)pyrimidine contacts are provided by residues Q36 to K40 and D68. Residues D69 and D88 each coordinate Mg(2+). 4-amino-2-methyl-5-(diphosphooxymethyl)pyrimidine is bound at residue S106. 2-[(2R,5Z)-2-carboxy-4-methylthiazol-5(2H)-ylidene]ethyl phosphate is bound at residue T132–T134. K135 is a binding site for 4-amino-2-methyl-5-(diphosphooxymethyl)pyrimidine. 2-[(2R,5Z)-2-carboxy-4-methylthiazol-5(2H)-ylidene]ethyl phosphate contacts are provided by residues G162 and V182 to S183.

It belongs to the thiamine-phosphate synthase family. Mg(2+) is required as a cofactor.

The enzyme catalyses 2-[(2R,5Z)-2-carboxy-4-methylthiazol-5(2H)-ylidene]ethyl phosphate + 4-amino-2-methyl-5-(diphosphooxymethyl)pyrimidine + 2 H(+) = thiamine phosphate + CO2 + diphosphate. The catalysed reaction is 2-(2-carboxy-4-methylthiazol-5-yl)ethyl phosphate + 4-amino-2-methyl-5-(diphosphooxymethyl)pyrimidine + 2 H(+) = thiamine phosphate + CO2 + diphosphate. It catalyses the reaction 4-methyl-5-(2-phosphooxyethyl)-thiazole + 4-amino-2-methyl-5-(diphosphooxymethyl)pyrimidine + H(+) = thiamine phosphate + diphosphate. It participates in cofactor biosynthesis; thiamine diphosphate biosynthesis; thiamine phosphate from 4-amino-2-methyl-5-diphosphomethylpyrimidine and 4-methyl-5-(2-phosphoethyl)-thiazole: step 1/1. Condenses 4-methyl-5-(beta-hydroxyethyl)thiazole monophosphate (THZ-P) and 2-methyl-4-amino-5-hydroxymethyl pyrimidine pyrophosphate (HMP-PP) to form thiamine monophosphate (TMP). The chain is Thiamine-phosphate synthase from Pyrococcus abyssi (strain GE5 / Orsay).